The primary structure comprises 249 residues: ATP synthase subunit a, chloroplastic (249 aa).

The next 5 helical transmembrane spans lie at 40–60 (QVLI…VLAI), 97–117 (VPFI…GALL), 136–156 (INTT…AGLS), 201–221 (LVVV…VMFL), and 222–242 (GLFT…AYIG).

It belongs to the ATPase A chain family. As to quaternary structure, F-type ATPases have 2 components, CF(1) - the catalytic core - and CF(0) - the membrane proton channel. CF(1) has five subunits: alpha(3), beta(3), gamma(1), delta(1), epsilon(1). CF(0) has four main subunits: a, b, b' and c.

It localises to the plastid. The protein resides in the chloroplast thylakoid membrane. In terms of biological role, key component of the proton channel; it plays a direct role in the translocation of protons across the membrane. This chain is ATP synthase subunit a, chloroplastic, found in Capsella bursa-pastoris (Shepherd's purse).